The following is a 117-amino-acid chain: Tyrosine-protein phosphatase 25 (117 aa).

Positions 1–117 constitute a Tyrosine-protein phosphatase domain; the sequence is WLMIIEQKCN…DLIGQSPIVV (117 aa). Asp85 is a binding site for substrate.

The protein belongs to the protein-tyrosine phosphatase family.

The enzyme catalyses O-phospho-L-tyrosyl-[protein] + H2O = L-tyrosyl-[protein] + phosphate. The protein is Tyrosine-protein phosphatase 25 (STY-25) of Styela plicata (Wrinkled sea squirt).